A 437-amino-acid polypeptide reads, in one-letter code: Adenylosuccinate synthetase (437 aa).

GTP-binding positions include 12–18 (GDEGKGK) and 40–42 (GHT). Asp-13 (proton acceptor) is an active-site residue. Mg(2+) is bound by residues Asp-13 and Gly-40. IMP is bound by residues 13 to 16 (DEGK), 38 to 41 (NAGH), Thr-128, Arg-142, Gln-223, Thr-238, and Arg-302. His-41 functions as the Proton donor in the catalytic mechanism. Substrate is bound at residue 298–304 (TTTGRRR). GTP is bound by residues Arg-304, 330-332 (KLD), and 412-414 (SLG).

The protein belongs to the adenylosuccinate synthetase family. In terms of assembly, homodimer. It depends on Mg(2+) as a cofactor.

The protein resides in the cytoplasm. It catalyses the reaction IMP + L-aspartate + GTP = N(6)-(1,2-dicarboxyethyl)-AMP + GDP + phosphate + 2 H(+). It functions in the pathway purine metabolism; AMP biosynthesis via de novo pathway; AMP from IMP: step 1/2. Its function is as follows. Plays an important role in the de novo pathway of purine nucleotide biosynthesis. Catalyzes the first committed step in the biosynthesis of AMP from IMP. This is Adenylosuccinate synthetase from Prochlorococcus marinus (strain NATL1A).